Consider the following 162-residue polypeptide: Probable E3 ubiquitin-protein ligase XERICO (162 aa).

The helical transmembrane segment at 12–28 (GMLCVILVNTALSISIV) threads the bilayer. The RING-type; atypical zinc finger occupies 103-145 (CSVCLSKFQGDSEINKLKCGHLFHKTCLEKWIDYWNITCPLCR).

Interacts with UBC8 and TULP9. Ubiquitous. Higher expression in actively growing tissues.

It is found in the membrane. It carries out the reaction S-ubiquitinyl-[E2 ubiquitin-conjugating enzyme]-L-cysteine + [acceptor protein]-L-lysine = [E2 ubiquitin-conjugating enzyme]-L-cysteine + N(6)-ubiquitinyl-[acceptor protein]-L-lysine.. It participates in protein modification; protein ubiquitination. Function on abscisic acid homeostasis at post-translational level, probably through ubiquitin/proteasome-dependent substrate-specific degradation. The sequence is that of Probable E3 ubiquitin-protein ligase XERICO (XERICO) from Arabidopsis thaliana (Mouse-ear cress).